We begin with the raw amino-acid sequence, 171 residues long: ATP synthase subunit b (171 aa).

A helical membrane pass occupies residues Phe12–Tyr34.

This sequence belongs to the ATPase B chain family. As to quaternary structure, F-type ATPases have 2 components, F(1) - the catalytic core - and F(0) - the membrane proton channel. F(1) has five subunits: alpha(3), beta(3), gamma(1), delta(1), epsilon(1). F(0) has four main subunits: a(1), b(1), b'(1) and c(10-14). The alpha and beta chains form an alternating ring which encloses part of the gamma chain. F(1) is attached to F(0) by a central stalk formed by the gamma and epsilon chains, while a peripheral stalk is formed by the delta, b and b' chains.

The protein localises to the cellular thylakoid membrane. Its function is as follows. F(1)F(0) ATP synthase produces ATP from ADP in the presence of a proton or sodium gradient. F-type ATPases consist of two structural domains, F(1) containing the extramembraneous catalytic core and F(0) containing the membrane proton channel, linked together by a central stalk and a peripheral stalk. During catalysis, ATP synthesis in the catalytic domain of F(1) is coupled via a rotary mechanism of the central stalk subunits to proton translocation. Component of the F(0) channel, it forms part of the peripheral stalk, linking F(1) to F(0). This chain is ATP synthase subunit b, found in Prochlorococcus marinus (strain MIT 9211).